A 276-amino-acid chain; its full sequence is Rhomboid protease GlpG (276 aa).

6 helical membrane-spanning segments follow: residues 94-114, 142-162, 169-189, 192-212, 229-249, and 250-270; these read GPVT…MQIL, ALMH…WYLG, LGSG…GYVQ, FSGP…GYVW, LIIF…GMSM, and ANGA…VDSL. Ser-201 acts as the Nucleophile in catalysis. The active site involves His-254.

It belongs to the peptidase S54 family.

Its subcellular location is the cell inner membrane. It catalyses the reaction Cleaves type-1 transmembrane domains using a catalytic dyad composed of serine and histidine that are contributed by different transmembrane domains.. Rhomboid-type serine protease that catalyzes intramembrane proteolysis. The sequence is that of Rhomboid protease GlpG from Escherichia coli O81 (strain ED1a).